A 959-amino-acid chain; its full sequence is Glycine dehydrogenase (decarboxylating) (959 aa).

Lys-708 carries the post-translational modification N6-(pyridoxal phosphate)lysine.

The protein belongs to the GcvP family. As to quaternary structure, the glycine cleavage system is composed of four proteins: P, T, L and H. It depends on pyridoxal 5'-phosphate as a cofactor.

It carries out the reaction N(6)-[(R)-lipoyl]-L-lysyl-[glycine-cleavage complex H protein] + glycine + H(+) = N(6)-[(R)-S(8)-aminomethyldihydrolipoyl]-L-lysyl-[glycine-cleavage complex H protein] + CO2. The glycine cleavage system catalyzes the degradation of glycine. The P protein binds the alpha-amino group of glycine through its pyridoxal phosphate cofactor; CO(2) is released and the remaining methylamine moiety is then transferred to the lipoamide cofactor of the H protein. The chain is Glycine dehydrogenase (decarboxylating) from Serratia proteamaculans (strain 568).